The sequence spans 373 residues: Erythronate-4-phosphate dehydrogenase (373 aa).

Positions 45 and 66 each coordinate substrate. NAD(+) contacts are provided by D146 and T175. The active site involves R208. D232 contributes to the NAD(+) binding site. The active site involves E237. H254 acts as the Proton donor in catalysis. G257 serves as a coordination point for NAD(+). Y258 is a substrate binding site.

Belongs to the D-isomer specific 2-hydroxyacid dehydrogenase family. PdxB subfamily. In terms of assembly, homodimer.

The protein localises to the cytoplasm. It carries out the reaction 4-phospho-D-erythronate + NAD(+) = (R)-3-hydroxy-2-oxo-4-phosphooxybutanoate + NADH + H(+). It functions in the pathway cofactor biosynthesis; pyridoxine 5'-phosphate biosynthesis; pyridoxine 5'-phosphate from D-erythrose 4-phosphate: step 2/5. Its function is as follows. Catalyzes the oxidation of erythronate-4-phosphate to 3-hydroxy-2-oxo-4-phosphonooxybutanoate. In Serratia proteamaculans (strain 568), this protein is Erythronate-4-phosphate dehydrogenase.